Consider the following 361-residue polypeptide: Large ribosomal subunit protein mL45 (361 aa).

Residues 319-361 are disordered; it reads EPPKELSAGDAEVKQVDSVGEQSKEQLPLATPVESHTKPSLAI.

It belongs to the mitochondrion-specific ribosomal protein mL45 family.

The protein resides in the mitochondrion. In Drosophila melanogaster (Fruit fly), this protein is Large ribosomal subunit protein mL45 (mRpL45).